We begin with the raw amino-acid sequence, 403 residues long: MRVLVINSGSSSIKYQLIEMEGEKVLCKGIAERIGIEGSRLVHRVGDEKHVIERELPDHEEALKLILNTLVDEKLGVIKDLKEIDAVGHRVVHGGERFKESVLVDEEVLKAIEEVSPLAPLHNPANLMGIKAAMKLLPGVPNVAVFDTAFHQTIPQKAYLYAIPYEYYEKYKIRRYGFHGTSHRYVSKRAAEILGKKLEELKIITCHIGNGASVAAVKYGKCVDTSMGFTPLEGLVMGTRSGDLDPAIPFFIMEKEGISPQEMYDILNKKSGVYGLSKGFSSDMRDIEEAALKGDEWCKLVLEIYDYRIAKYIGAYAAAMNGVDAIVFTAGVGENSPITREDVCSYLEFLGVKLDKQKNEETIRGKEGIISTPDSRVKVLVVPTNEELMIARDTKEIVEKIGR.

Asn7 contacts Mg(2+). Lys14 contributes to the ATP binding site. Arg90 lines the substrate pocket. Catalysis depends on Asp147, which acts as the Proton donor/acceptor. ATP is bound by residues 207 to 211 (HIGNG), 283 to 285 (DMR), and 331 to 335 (GVGEN). Position 386 (Glu386) interacts with Mg(2+).

This sequence belongs to the acetokinase family. In terms of assembly, homodimer. It depends on Mg(2+) as a cofactor. The cofactor is Mn(2+).

Its subcellular location is the cytoplasm. It catalyses the reaction acetate + ATP = acetyl phosphate + ADP. It functions in the pathway metabolic intermediate biosynthesis; acetyl-CoA biosynthesis; acetyl-CoA from acetate: step 1/2. Functionally, catalyzes the formation of acetyl phosphate from acetate and ATP. Can also catalyze the reverse reaction. Phosphorylates propionate (54%) in addition to acetate (100%). Uses GTP (100%), ITP (163%), UTP (56%), and CTP (21%) as phosphoryl donors in addition to ATP (100%). The chain is Acetate kinase from Thermotoga maritima (strain ATCC 43589 / DSM 3109 / JCM 10099 / NBRC 100826 / MSB8).